Consider the following 208-residue polypeptide: Thiamine-phosphate synthase (208 aa).

4-amino-2-methyl-5-(diphosphooxymethyl)pyrimidine-binding positions include 37–41 and asparagine 73; that span reads QYREK. Residues aspartate 74 and aspartate 93 each contribute to the Mg(2+) site. Serine 112 lines the 4-amino-2-methyl-5-(diphosphooxymethyl)pyrimidine pocket. 139 to 141 lines the 2-[(2R,5Z)-2-carboxy-4-methylthiazol-5(2H)-ylidene]ethyl phosphate pocket; that stretch reads TIS. Position 142 (lysine 142) interacts with 4-amino-2-methyl-5-(diphosphooxymethyl)pyrimidine. 2-[(2R,5Z)-2-carboxy-4-methylthiazol-5(2H)-ylidene]ethyl phosphate is bound by residues glycine 171 and 191 to 192; that span reads IS.

It belongs to the thiamine-phosphate synthase family. Mg(2+) serves as cofactor.

The enzyme catalyses 2-[(2R,5Z)-2-carboxy-4-methylthiazol-5(2H)-ylidene]ethyl phosphate + 4-amino-2-methyl-5-(diphosphooxymethyl)pyrimidine + 2 H(+) = thiamine phosphate + CO2 + diphosphate. The catalysed reaction is 2-(2-carboxy-4-methylthiazol-5-yl)ethyl phosphate + 4-amino-2-methyl-5-(diphosphooxymethyl)pyrimidine + 2 H(+) = thiamine phosphate + CO2 + diphosphate. It carries out the reaction 4-methyl-5-(2-phosphooxyethyl)-thiazole + 4-amino-2-methyl-5-(diphosphooxymethyl)pyrimidine + H(+) = thiamine phosphate + diphosphate. Its pathway is cofactor biosynthesis; thiamine diphosphate biosynthesis; thiamine phosphate from 4-amino-2-methyl-5-diphosphomethylpyrimidine and 4-methyl-5-(2-phosphoethyl)-thiazole: step 1/1. In terms of biological role, condenses 4-methyl-5-(beta-hydroxyethyl)thiazole monophosphate (THZ-P) and 2-methyl-4-amino-5-hydroxymethyl pyrimidine pyrophosphate (HMP-PP) to form thiamine monophosphate (TMP). This is Thiamine-phosphate synthase from Listeria welshimeri serovar 6b (strain ATCC 35897 / DSM 20650 / CCUG 15529 / CIP 8149 / NCTC 11857 / SLCC 5334 / V8).